Consider the following 51-residue polypeptide: Large ribosomal subunit protein bL33 (51 aa).

The protein belongs to the bacterial ribosomal protein bL33 family.

In Ruthia magnifica subsp. Calyptogena magnifica, this protein is Large ribosomal subunit protein bL33.